We begin with the raw amino-acid sequence, 95 residues long: Integration host factor subunit beta (95 aa).

This sequence belongs to the bacterial histone-like protein family. As to quaternary structure, heterodimer of an alpha and a beta chain.

This protein is one of the two subunits of integration host factor, a specific DNA-binding protein that functions in genetic recombination as well as in transcriptional and translational control. The sequence is that of Integration host factor subunit beta from Psychromonas ingrahamii (strain DSM 17664 / CCUG 51855 / 37).